The sequence spans 565 residues: Cytokinin dehydrogenase 2 (565 aa).

Residues 1-20 (MKQEQVRMAVLLMLNCFVKA) form the signal peptide. N-linked (GlcNAc...) asparagine glycosylation is present at asparagine 64. Residues 74 to 255 (RLAAAAAVLY…TRARIPLAPA (182 aa)) enclose the FAD-binding PCMH-type domain. 3 residues coordinate FAD: alanine 108, glycine 110, and glycine 112. Histidine 113 carries the pros-8alpha-FAD histidine modification. Residues serine 114, glutamine 118, aspartate 179, threonine 184, serine 190, isoleucine 194, and isoleucine 245 each coordinate FAD. Asparagine 464 carries an N-linked (GlcNAc...) asparagine glycan. Residues tyrosine 517, serine 554, and glutamine 557 each contribute to the FAD site.

The protein belongs to the oxygen-dependent FAD-linked oxidoreductase family. In terms of assembly, monomer. Requires FAD as cofactor. In terms of processing, glycosylated. Mostly expressed in leaves, culms, inflorescence meristems, and flowers, especially in vascular tissues.

The protein resides in the secreted. Its subcellular location is the extracellular space. The catalysed reaction is N(6)-dimethylallyladenine + A + H2O = 3-methyl-2-butenal + adenine + AH2. Functionally, catalyzes the oxidation of cytokinins, a family of N(6)-substituted adenine derivatives that are plant hormones, where the substituent is an isopentenyl group. Is a major QTL involved in grain yield. Modulates the number of reproductive organs by regulating the cytokinin accumulation in inflorescence meristems. Acts as negative regulator of panicle branching. The protein is Cytokinin dehydrogenase 2 of Oryza sativa subsp. japonica (Rice).